We begin with the raw amino-acid sequence, 84 residues long: Carboxysome shell vertex protein CsoS4B (84 aa).

The region spanning 1 to 77 is the BMV domain; it reads MQILQVKKQL…TDLTVGGIID (77 aa).

This sequence belongs to the CcmL/EutN family. CsoS4 subfamily. As to quaternary structure, homopentamer.

Its subcellular location is the carboxysome. Probably forms vertices in the carboxysome, a polyhedral inclusion where RuBisCO (ribulose bisphosphate carboxylase, cbbL-cbbS) is sequestered. Has been modeled to induce curvature upon insertion into an otherwise flat hexagonal layer of major carboxysome subunits. In Hydrogenovibrio crunogenus (strain DSM 25203 / XCL-2) (Thiomicrospira crunogena), this protein is Carboxysome shell vertex protein CsoS4B.